A 1183-amino-acid chain; its full sequence is LRR receptor-like serine/threonine-protein kinase FLS2 (1183 aa).

An N-terminal signal peptide occupies residues 1-41; sequence MERNKFASKMSQHYTKTICIAVVLVAVLFSLSSAAAAGSGA. The Extracellular portion of the chain corresponds to 42-809; sequence AVSVQLEALL…GKKRVFSRTG (768 aa). Cys-87 and Cys-94 are disulfide-bonded. Residues Asn-88 and Asn-120 are each glycosylated (N-linked (GlcNAc...) asparagine). LRR repeat units lie at residues 97–120, 121–145, 147–169, 171–193, 194–217, 218–241, 242–265, 267–289, 290–313, 315–337, 338–361, 363–385, and 386–409; these read AGQV…FLGN, ISTL…LGRL, ELEQ…LCNC, AMWA…IGDL, SNLE…MAKL, KGIM…IGDL, SNLQ…LGRC, NLTL…LGEL, TNLE…LRRC, SLLN…LGEL, PSLQ…LTNL, NLTI…IGSL, and RNLR…ISNC. A disulfide bridge connects residues Cys-167 and Cys-189. N-linked (GlcNAc...) asparagine glycosylation is found at Asn-168 and Asn-181. N-linked (GlcNAc...) asparagine glycosylation is present at Asn-267. N-linked (GlcNAc...) asparagine glycosylation is found at Asn-363, Asn-395, Asn-408, and Asn-414. LRR repeat units follow at residues 433–457, 459–480, 481–505, 507–529, 530–553, 555–577, 578–600, 601–625, 627–651, 652–675, 676–699, 701–724, 725–748, and 749–773; these read LQSL…LFDC, QLQK…LVGQ, LGNL…IGNM, KLIS…ISNM, SSLQ…VFEL, QLTI…VANL, RSLS…ALGR, LDQL…VIAS, SNVQ…IGGL, VMVQ…LAGC, KNLY…LFPQ, DLLT…IAAL, KHIQ…LANL, and TALR…VFRN. N-linked (GlcNAc...) asparagine glycosylation is found at Asn-483, Asn-504, and Asn-528. Asn-591 carries an N-linked (GlcNAc...) asparagine glycan. Asn-634 carries an N-linked (GlcNAc...) asparagine glycan. 4 N-linked (GlcNAc...) asparagine glycosylation sites follow: Asn-707, Asn-747, Asn-755, and Asn-773. Residues 810-830 traverse the membrane as a helical segment; it reads LVILVVLIALSTLLLLMVATI. The Cytoplasmic portion of the chain corresponds to 831-1183; the sequence is LLVSYRRYRR…LKMSKLVGED (353 aa). Residues 876 to 1179 form the Protein kinase domain; that stretch reads FDQGNVIGSS…LSSLLKMSKL (304 aa). ATP contacts are provided by residues 882 to 890 and Lys-908; that span reads IGSSNLSTV. Asp-1013 serves as the catalytic Proton acceptor.

This sequence belongs to the protein kinase superfamily. Ser/Thr protein kinase family. In terms of assembly, interacts with SERK2.

It localises to the cell membrane. It carries out the reaction L-seryl-[protein] + ATP = O-phospho-L-seryl-[protein] + ADP + H(+). The enzyme catalyses L-threonyl-[protein] + ATP = O-phospho-L-threonyl-[protein] + ADP + H(+). Functionally, constitutes the pattern-recognition receptor (PPR) that determines the specific perception of flagellin (flg22), a potent elicitor of the defense response to pathogen-associated molecular patterns (PAMPs). Recognizes flg22 from Pseudomonas aeruginosa and Acidovorax avenae. flg22 is a peptide derived from the bacterial flagellin N-terminus sequence. Does not recognize flg22 from Xanthomonas oryzae pv. oryzae (Xoo) or Xanthomonas oryzae pv. oryzicola (Xoc). The chain is LRR receptor-like serine/threonine-protein kinase FLS2 from Oryza sativa subsp. japonica (Rice).